A 304-amino-acid chain; its full sequence is Ribokinase (304 aa).

Substrate-binding positions include 12-14 (NVD), 41-45 (GKGAN), and E142. Residues N186 and 222-227 (TLGKQG) each bind ATP. K(+) contacts are provided by D248 and T250. Residues 253 to 254 (GD) and N279 each bind ATP. D254 provides a ligand contact to substrate. D254 serves as the catalytic Proton acceptor. T285, K288, G290, and S294 together coordinate K(+).

This sequence belongs to the carbohydrate kinase PfkB family. Ribokinase subfamily. In terms of assembly, homodimer. The cofactor is Mg(2+).

It localises to the cytoplasm. The catalysed reaction is D-ribose + ATP = D-ribose 5-phosphate + ADP + H(+). It functions in the pathway carbohydrate metabolism; D-ribose degradation; D-ribose 5-phosphate from beta-D-ribopyranose: step 2/2. Its activity is regulated as follows. Activated by a monovalent cation that binds near, but not in, the active site. The most likely occupant of the site in vivo is potassium. Ion binding induces a conformational change that may alter substrate affinity. Catalyzes the phosphorylation of ribose at O-5 in a reaction requiring ATP and magnesium. The resulting D-ribose-5-phosphate can then be used either for sythesis of nucleotides, histidine, and tryptophan, or as a component of the pentose phosphate pathway. The polypeptide is Ribokinase (Staphylococcus aureus (strain COL)).